Reading from the N-terminus, the 266-residue chain is Pyridoxal phosphate phosphatase YigL (266 aa).

The Nucleophile role is filled by Asp8. Position 8 (Asp8) interacts with Mg(2+). Position 9 (Leu9) interacts with phosphate. Residue Asp10 coordinates Mg(2+). Residues 42-43 and Lys191 each bind phosphate; that span reads TG. Asp214 is a binding site for Mg(2+). Phosphate is bound at residue Asn217.

It belongs to the HAD-like hydrolase superfamily. Cof family. Requires Mg(2+) as cofactor. Mn(2+) is required as a cofactor. Co(2+) serves as cofactor. It depends on Zn(2+) as a cofactor.

It carries out the reaction pyridoxal 5'-phosphate + H2O = pyridoxal + phosphate. The enzyme catalyses sugar phosphate + H2O = sugar + phosphate.. Functionally, catalyzes the dephosphorylation of pyridoxal-phosphate (PLP) and sugar phosphate. The sequence is that of Pyridoxal phosphate phosphatase YigL (yigL) from Escherichia coli O157:H7.